A 225-amino-acid chain; its full sequence is Methyl-CpG-binding domain-containing protein 6 (225 aa).

The segment at 25–92 (GDGTLDSSAK…PGWRVEDKIR (68 aa)) is disordered. Residues 71 to 146 (RKRAAPGDNW…ENTYFNPDHF (76 aa)) enclose the MBD domain.

Homodimer and heterodimer with MBD5. Interacts with DDM1 via its MBD domain. Interacts with NTF2, RPS2C, HDA6 and AGO4. In terms of tissue distribution, expressed in rosette leaves, buds, flowers, stems, mature seeds and roots.

The protein localises to the nucleus. It is found in the chromosome. The protein resides in the nucleolus. In terms of biological role, transcriptional regulator that binds CpG, CpNpN and CpNpG (N is A, T, or C) islands in promoters regardless the DNA methylation status. Plays probably a role in gene silencing. May associate with histone deacetylase proteins (HDAC). Required for nucleolar dominance that consist in the silencing of rRNA genes inherited from one progenitor in genetic hybrids. Recruited to rRNA genes in a DRM2-dependent manner. Maintains gene silencing by interacting with RNA binding proteins (e.g. NTF2, RPS2C, HDA6 and AGO4) and by regulating DNA methylation status. The protein is Methyl-CpG-binding domain-containing protein 6 of Arabidopsis thaliana (Mouse-ear cress).